The following is a 156-amino-acid chain: Transcriptional repressor NrdR (156 aa).

Residues 3 to 34 fold into a zinc finger; that stretch reads CPFCSETDTKVIDSRLVADGAQVRRRRECLTC. The 91-residue stretch at 49-139 folds into the ATP-cone domain; the sequence is PRVIKQDGTR…VYRSFQDLSE (91 aa).

It belongs to the NrdR family. Requires Zn(2+) as cofactor.

Negatively regulates transcription of bacterial ribonucleotide reductase nrd genes and operons by binding to NrdR-boxes. The sequence is that of Transcriptional repressor NrdR from Saccharophagus degradans (strain 2-40 / ATCC 43961 / DSM 17024).